The primary structure comprises 277 residues: Thymidylate synthase (277 aa).

A dUMP-binding site is contributed by Arg-21. (6R)-5,10-methylene-5,6,7,8-tetrahydrofolate is bound at residue His-51. 126–127 (RR) contacts dUMP. Residue Cys-159 is the Nucleophile of the active site. DUMP is bound by residues 179-182 (RSAD), Asn-190, and 220-222 (HLY). Asp-182 lines the (6R)-5,10-methylene-5,6,7,8-tetrahydrofolate pocket. Position 276 (Ala-276) interacts with (6R)-5,10-methylene-5,6,7,8-tetrahydrofolate.

The protein belongs to the thymidylate synthase family. Bacterial-type ThyA subfamily. In terms of assembly, homodimer.

It is found in the cytoplasm. The enzyme catalyses dUMP + (6R)-5,10-methylene-5,6,7,8-tetrahydrofolate = 7,8-dihydrofolate + dTMP. It participates in pyrimidine metabolism; dTTP biosynthesis. Catalyzes the reductive methylation of 2'-deoxyuridine-5'-monophosphate (dUMP) to 2'-deoxythymidine-5'-monophosphate (dTMP) while utilizing 5,10-methylenetetrahydrofolate (mTHF) as the methyl donor and reductant in the reaction, yielding dihydrofolate (DHF) as a by-product. This enzymatic reaction provides an intracellular de novo source of dTMP, an essential precursor for DNA biosynthesis. This is Thymidylate synthase from Thioalkalivibrio sulfidiphilus (strain HL-EbGR7).